Consider the following 165-residue polypeptide: MTDSELMQLSEQVGQALKARGATVTTAESCTGGWVAKVITDIAGSSAWFERGFVTYSNEAKAQMIGVREETLAQHGAVSEPVVVEMAIGALKAARADYAVSISGIAGPDGGSEEKPVGTVWFAFATARGEGITRRECFSGDRDAVRRQATAYALQTLWQQFLQNT.

The protein belongs to the CinA family. PncC subfamily. In terms of assembly, homodimer.

It catalyses the reaction beta-nicotinamide D-ribonucleotide + H2O = nicotinate beta-D-ribonucleotide + NH4(+). In terms of biological role, has NMN aminohydrolase activity, not active on other substrates. This chain is Nicotinamide-nucleotide amidohydrolase PncC (pncC), found in Escherichia coli O6:H1 (strain CFT073 / ATCC 700928 / UPEC).